The primary structure comprises 431 residues: Pyroglutamylated RF-amide peptide receptor (431 aa).

Residues 1–46 (MQALNITPEQFSRLLRDHNLTREQFIALYRLRPLVYTPELPGRAKL) are Extracellular-facing. A glycan (N-linked (GlcNAc...) asparagine) is linked at asparagine 19. The helical transmembrane segment at 47 to 67 (ALVLTGVLIFALALFGNALVF) threads the bilayer. The Cytoplasmic portion of the chain corresponds to 68–81 (YVVTRSKAMRTVTN). A helical transmembrane segment spans residues 82–102 (IFICSLALSDLLITFFCIPVT). Residues 103–120 (MLQNISDNWLGGAFICKM) lie on the Extracellular side of the membrane. The chain crosses the membrane as a helical span at residues 121 to 141 (VPFVQSTAVVTEILTMTCIAV). At 142–162 (ERHQGLVHPFKMKWQYTNRRA) the chain is on the cytoplasmic side. The chain crosses the membrane as a helical span at residues 163–183 (FTMLGVVWLVAVIVGSPMWHV). The Extracellular portion of the chain corresponds to 184 to 212 (QQLEIKYDFLYEKEHICCLEEWTSPVHQK). The chain crosses the membrane as a helical span at residues 213-233 (IYTTFILVILFLLPLMVMLIL). Over 234–271 (YSKIGYELWIKKRVGDGSVLRTIHGKEMSKIARKKKRA) the chain is Cytoplasmic. Residues 272-292 (VIMMVTVVALFAVCWAPFHVV) traverse the membrane as a helical segment. At 293-311 (HMMIEYSNFEKEYDDVTIK) the chain is on the extracellular side. The chain crosses the membrane as a helical span at residues 312 to 332 (MIFAIVQIIGFSNSICNPIVY). Residues 333-431 (AFMNENFKKN…AENSPLDSGH (99 aa)) lie on the Cytoplasmic side of the membrane.

It belongs to the G-protein coupled receptor 1 family. Expressed widely in the brain with high levels in the hypothalamus, trigeminal ganglia and vestibular neurons, and moderate levels in the amygdala, cortex, pituitary, hippocampus, thalamus, caudate nucleus and medulla oblongata. In peripheral tissues, expressed at high levels in the retina and at moderate levels in the heart, kidney, testis and thyroid.

It is found in the cell membrane. In terms of biological role, receptor for the orexigenic neuropeptide QRFP. The activity of this receptor is mediated by G proteins that modulate adenylate cyclase activity and intracellular calcium levels. The sequence is that of Pyroglutamylated RF-amide peptide receptor (QRFPR) from Homo sapiens (Human).